Here is a 663-residue protein sequence, read N- to C-terminus: UvrABC system protein B (663 aa).

The Helicase ATP-binding domain occupies 30 to 414 (EGIKAGKRHQ…IEHTDKMVEQ (385 aa)). Residue 43 to 50 (GATGTGKT) participates in ATP binding. Positions 96-119 (YYDYYQPEAYVPSTDTFIEKDASI) match the Beta-hairpin motif. Positions 434-600 (QIDDLLSEIQ…TINKKIHDLI (167 aa)) constitute a Helicase C-terminal domain. The UVR domain maps to 627–662 (QKTIDNIEKEMKQAAKDLDFEKATELRDMLFELKAE).

Belongs to the UvrB family. In terms of assembly, forms a heterotetramer with UvrA during the search for lesions. Interacts with UvrC in an incision complex.

Its subcellular location is the cytoplasm. Its function is as follows. The UvrABC repair system catalyzes the recognition and processing of DNA lesions. A damage recognition complex composed of 2 UvrA and 2 UvrB subunits scans DNA for abnormalities. Upon binding of the UvrA(2)B(2) complex to a putative damaged site, the DNA wraps around one UvrB monomer. DNA wrap is dependent on ATP binding by UvrB and probably causes local melting of the DNA helix, facilitating insertion of UvrB beta-hairpin between the DNA strands. Then UvrB probes one DNA strand for the presence of a lesion. If a lesion is found the UvrA subunits dissociate and the UvrB-DNA preincision complex is formed. This complex is subsequently bound by UvrC and the second UvrB is released. If no lesion is found, the DNA wraps around the other UvrB subunit that will check the other stand for damage. The polypeptide is UvrABC system protein B (Staphylococcus aureus (strain MSSA476)).